The following is a 482-amino-acid chain: tRNA sulfurtransferase (482 aa).

The 105-residue stretch at 61–165 (DVTLAVLTQT…NDKLNLIIAR (105 aa)) folds into the THUMP domain. ATP is bound by residues 183–184 (LI), Lys-265, Gly-287, and Gln-296. Residues Cys-344 and Cys-456 are joined by a disulfide bond. One can recognise a Rhodanese domain in the interval 404–482 (LGSDVVVLDI…GYKNVKVYRP (79 aa)). Cys-456 functions as the Cysteine persulfide intermediate in the catalytic mechanism.

This sequence belongs to the ThiI family.

It localises to the cytoplasm. It catalyses the reaction [ThiI sulfur-carrier protein]-S-sulfanyl-L-cysteine + a uridine in tRNA + 2 reduced [2Fe-2S]-[ferredoxin] + ATP + H(+) = [ThiI sulfur-carrier protein]-L-cysteine + a 4-thiouridine in tRNA + 2 oxidized [2Fe-2S]-[ferredoxin] + AMP + diphosphate. The enzyme catalyses [ThiS sulfur-carrier protein]-C-terminal Gly-Gly-AMP + S-sulfanyl-L-cysteinyl-[cysteine desulfurase] + AH2 = [ThiS sulfur-carrier protein]-C-terminal-Gly-aminoethanethioate + L-cysteinyl-[cysteine desulfurase] + A + AMP + 2 H(+). Its pathway is cofactor biosynthesis; thiamine diphosphate biosynthesis. In terms of biological role, catalyzes the ATP-dependent transfer of a sulfur to tRNA to produce 4-thiouridine in position 8 of tRNAs, which functions as a near-UV photosensor. Also catalyzes the transfer of sulfur to the sulfur carrier protein ThiS, forming ThiS-thiocarboxylate. This is a step in the synthesis of thiazole, in the thiamine biosynthesis pathway. The sulfur is donated as persulfide by IscS. The polypeptide is tRNA sulfurtransferase (Aliivibrio fischeri (strain ATCC 700601 / ES114) (Vibrio fischeri)).